Reading from the N-terminus, the 148-residue chain is Truncated transcription factor CAULIFLOWER C (148 aa).

Residues 1 to 61 (MGRGRVEMKR…GKLFEYSSES (61 aa)) enclose the MADS-box domain. One can recognise a K-box; partial domain in the interval 90-148 (QTNWSMEYSRLKAKIELWERNQRHYLGEDLESISIKELQNLEQQLDTSLKHIPSRKVCK).

As to quaternary structure, homodimer capable of binding to CArG-box sequences.

Its subcellular location is the nucleus. Its function is as follows. Probable transcription factor that promotes early floral meristem identity in synergy with APETALA1, FRUITFULL and LEAFY. Is required subsequently for the transition of an inflorescence meristem into a floral meristem. Seems to be partially redundant to the function of APETALA1. The chain is Truncated transcription factor CAULIFLOWER C (CAL-C) from Brassica oleracea var. botrytis (Cauliflower).